A 163-amino-acid polypeptide reads, in one-letter code: Cytosolic iron-sulfur assembly component 2B (163 aa).

The protein belongs to the MIP18 family. Component of the CIA complex. Component of the MMXD complex, which includes CIAO1, ERCC2, CIAO2B, MMS19 and SLC25A5. Interacts with CIAO1, ERCC2 and MMS19; the interactions are direct. Interacts with KIF4A; the interaction facilitates the transfer of Fe-S clusters to KIF4A to ensure proper localization of KIF4A to the mitotic machinery. Interacts with CCDC117; the interaction is direct.

Its subcellular location is the nucleus. The protein resides in the cytoplasm. It localises to the cytoskeleton. It is found in the spindle. Functionally, component of the cytosolic iron-sulfur protein assembly (CIA) complex, a multiprotein complex that mediates the incorporation of iron-sulfur cluster into extramitochondrial Fe/S proteins. As a CIA complex component and in collaboration with CIAO1 and MMS19, binds to and facilitates the assembly of most cytosolic-nuclear Fe/S proteins. As part of the mitotic spindle-associated MMXD complex it plays a role in chromosome segregation, probably by facilitating iron-sulfur cluster assembly into ERCC2/XPD. Together with MMS19, facilitates the transfer of Fe-S clusters to the motor protein KIF4A, which ensures proper localization of KIF4A to mitotic machinery components to promote the progression of mitosis. The polypeptide is Cytosolic iron-sulfur assembly component 2B (Mus musculus (Mouse)).